A 334-amino-acid chain; its full sequence is Thiamine-binding periplasmic protein (334 aa).

The N-terminal stretch at 1–23 (MRLLSLLTFSLFAVIGLAPAAQA) is a signal peptide. Thiamine-binding positions include 64–65 (DG), 166–167 (AT), Trp202, and 220–223 (YTTS).

The protein belongs to the bacterial solute-binding protein 1 family. In terms of assembly, the complex is composed of two ATP-binding proteins (ThiQ), two transmembrane proteins (ThiP) and a solute-binding protein (ThiB).

The protein resides in the periplasm. Functionally, part of the ABC transporter complex ThiBPQ involved in thiamine import. This chain is Thiamine-binding periplasmic protein (thiB), found in Brucella melitensis biotype 1 (strain ATCC 23456 / CCUG 17765 / NCTC 10094 / 16M).